We begin with the raw amino-acid sequence, 441 residues long: Proline--tRNA ligase (441 aa).

Belongs to the class-II aminoacyl-tRNA synthetase family. ProS type 2 subfamily. As to quaternary structure, homodimer.

Its subcellular location is the cytoplasm. The catalysed reaction is tRNA(Pro) + L-proline + ATP = L-prolyl-tRNA(Pro) + AMP + diphosphate. Catalyzes the attachment of proline to tRNA(Pro) in a two-step reaction: proline is first activated by ATP to form Pro-AMP and then transferred to the acceptor end of tRNA(Pro). This Bartonella bacilliformis (strain ATCC 35685 / KC583 / Herrer 020/F12,63) protein is Proline--tRNA ligase.